The chain runs to 572 residues: Protein 5NUC (572 aa).

The first 25 residues, 1–25, serve as a signal peptide directing secretion; sequence MLFFLNFFVLVFSIELALLTASAAA. Aspartate 39 and histidine 41 together coordinate Zn(2+). Cysteine 54 and cysteine 64 form a disulfide bridge. N-linked (GlcNAc...) asparagine glycosylation is present at asparagine 82. Positions 93, 125, 227, and 250 each coordinate Zn(2+). Cysteines 360 and 365 form a disulfide. Substrate is bound by residues arginine 361, glutamine 399, arginine 404, and phenylalanine 427. N-linked (GlcNAc...) asparagine glycans are attached at residues asparagine 454 and asparagine 490. Cysteine 488 and cysteine 491 are joined by a disulfide. 512 to 518 lines the substrate pocket; it reads FMKDGGD.

It belongs to the 5'-nucleotidase family. Zn(2+) is required as a cofactor.

The enzyme catalyses UDP-sugar + H2O = UMP + alpha-D-aldose 1-phosphate.. The catalysed reaction is a ribonucleoside 5'-phosphate + H2O = a ribonucleoside + phosphate. Its function is as follows. Degradation of external UDP-glucose to uridine monophosphate and glucose-1-phosphate, which can then be used by the cell. This Lutzomyia longipalpis (Sand fly) protein is Protein 5NUC (5NUC).